Consider the following 36-residue polypeptide: Cytochrome b6-f complex subunit 5 (36 aa).

The chain crosses the membrane as a helical span at residues 5–25 (LLSGIVLGLIPITILGLLMAA).

It belongs to the PetG family. The 4 large subunits of the cytochrome b6-f complex are cytochrome b6, subunit IV (17 kDa polypeptide, PetD), cytochrome f and the Rieske protein, while the 4 small subunits are PetG, PetL, PetM and PetN. The complex functions as a dimer.

The protein resides in the plastid. The protein localises to the chloroplast thylakoid membrane. In terms of biological role, component of the cytochrome b6-f complex, which mediates electron transfer between photosystem II (PSII) and photosystem I (PSI), cyclic electron flow around PSI, and state transitions. PetG is required for either the stability or assembly of the cytochrome b6-f complex. The sequence is that of Cytochrome b6-f complex subunit 5 from Cyanidioschyzon merolae (strain NIES-3377 / 10D) (Unicellular red alga).